The primary structure comprises 867 residues: Protein translocase subunit SecA 1 (867 aa).

Residues Gln86, 104–108, and Asp493 contribute to the ATP site; that span reads GEGKT.

This sequence belongs to the SecA family. In terms of assembly, monomer and homodimer. Part of the essential Sec protein translocation apparatus which comprises SecA, SecYEG and auxiliary proteins SecDF. Other proteins may also be involved.

It is found in the cell membrane. Its subcellular location is the cytoplasm. The catalysed reaction is ATP + H2O + cellular proteinSide 1 = ADP + phosphate + cellular proteinSide 2.. In terms of biological role, part of the Sec protein translocase complex. Interacts with the SecYEG preprotein conducting channel. Has a central role in coupling the hydrolysis of ATP to the transfer of proteins into and across the cell membrane, serving as an ATP-driven molecular motor driving the stepwise translocation of polypeptide chains across the membrane. This chain is Protein translocase subunit SecA 1, found in Corynebacterium jeikeium (strain K411).